A 210-amino-acid chain; its full sequence is Large ribosomal subunit protein uL3 (210 aa).

Residues 119 to 151 (FQGAIKRHGQSRGPMSHGSRYHRRPGSMGPVAP) form a disordered region.

This sequence belongs to the universal ribosomal protein uL3 family. As to quaternary structure, part of the 50S ribosomal subunit. Forms a cluster with proteins L14 and L19.

Functionally, one of the primary rRNA binding proteins, it binds directly near the 3'-end of the 23S rRNA, where it nucleates assembly of the 50S subunit. The chain is Large ribosomal subunit protein uL3 from Bacillus cytotoxicus (strain DSM 22905 / CIP 110041 / 391-98 / NVH 391-98).